The primary structure comprises 59 residues: Large ribosomal subunit protein uL30 (59 aa).

The protein belongs to the universal ribosomal protein uL30 family. As to quaternary structure, part of the 50S ribosomal subunit.

This Photobacterium profundum (strain SS9) protein is Large ribosomal subunit protein uL30.